The sequence spans 572 residues: Oxygen-dependent choline dehydrogenase (572 aa).

FAD is bound at residue 7–36 (DYIIIGAGSAGNVLATRLTEDRDVTVLLLE). His-474 functions as the Proton acceptor in the catalytic mechanism.

Belongs to the GMC oxidoreductase family. Requires FAD as cofactor.

It catalyses the reaction choline + A = betaine aldehyde + AH2. It carries out the reaction betaine aldehyde + NAD(+) + H2O = glycine betaine + NADH + 2 H(+). The protein operates within amine and polyamine biosynthesis; betaine biosynthesis via choline pathway; betaine aldehyde from choline (cytochrome c reductase route): step 1/1. Involved in the biosynthesis of the osmoprotectant glycine betaine. Catalyzes the oxidation of choline to betaine aldehyde and betaine aldehyde to glycine betaine at the same rate. The polypeptide is Oxygen-dependent choline dehydrogenase (Paraburkholderia phymatum (strain DSM 17167 / CIP 108236 / LMG 21445 / STM815) (Burkholderia phymatum)).